The following is a 154-amino-acid chain: Large ribosomal subunit protein uL13 (154 aa).

Belongs to the universal ribosomal protein uL13 family. Part of the 50S ribosomal subunit.

In terms of biological role, this protein is one of the early assembly proteins of the 50S ribosomal subunit, although it is not seen to bind rRNA by itself. It is important during the early stages of 50S assembly. This Brucella anthropi (strain ATCC 49188 / DSM 6882 / CCUG 24695 / JCM 21032 / LMG 3331 / NBRC 15819 / NCTC 12168 / Alc 37) (Ochrobactrum anthropi) protein is Large ribosomal subunit protein uL13.